A 325-amino-acid polypeptide reads, in one-letter code: Endo-1,4-beta-xylanase 2 (325 aa).

A signal peptide spans 1 to 18 (MLYTSIFAAAMAASGAMA). Positions 26–325 (ASNCTTLDSF…KAAVKAIMAI (300 aa)) constitute a GH10 domain. The N-linked (GlcNAc...) asparagine glycan is linked to Asn-28. Glu-157 acts as the Proton donor in catalysis. Glu-262 functions as the Nucleophile in the catalytic mechanism. Residues Cys-280 and Cys-286 are joined by a disulfide bond.

The protein belongs to the glycosyl hydrolase 10 (cellulase F) family.

Its subcellular location is the secreted. It carries out the reaction Endohydrolysis of (1-&gt;4)-beta-D-xylosidic linkages in xylans.. It functions in the pathway glycan degradation; xylan degradation. Endo-1,4-beta-xylanase involved in the hydrolysis of xylan, a major structural heterogeneous polysaccharide found in plant biomass representing the second most abundant polysaccharide in the biosphere, after cellulose. This chain is Endo-1,4-beta-xylanase 2 (xyl2), found in Claviceps purpurea (Ergot fungus).